The sequence spans 172 residues: 3-hydroxydecanoyl-[acyl-carrier-protein] dehydratase (172 aa).

Residue H71 is part of the active site.

This sequence belongs to the thioester dehydratase family. FabA subfamily. Homodimer.

It is found in the cytoplasm. It catalyses the reaction a (3R)-hydroxyacyl-[ACP] = a (2E)-enoyl-[ACP] + H2O. The catalysed reaction is (3R)-hydroxydecanoyl-[ACP] = (2E)-decenoyl-[ACP] + H2O. The enzyme catalyses (2E)-decenoyl-[ACP] = (3Z)-decenoyl-[ACP]. It functions in the pathway lipid metabolism; fatty acid biosynthesis. Functionally, necessary for the introduction of cis unsaturation into fatty acids. Catalyzes the dehydration of (3R)-3-hydroxydecanoyl-ACP to E-(2)-decenoyl-ACP and then its isomerization to Z-(3)-decenoyl-ACP. Can catalyze the dehydratase reaction for beta-hydroxyacyl-ACPs with saturated chain lengths up to 16:0, being most active on intermediate chain length. The protein is 3-hydroxydecanoyl-[acyl-carrier-protein] dehydratase of Vibrio vulnificus (strain CMCP6).